A 358-amino-acid chain; its full sequence is Gap junction alpha-5 protein (358 aa).

At 1 to 19 (MGDWSFLGEFLEEVHKHST) the chain is on the cytoplasmic side. The chain crosses the membrane as a helical span at residues 20–40 (VIGKVWLTVLFIFRMLVLGTA). At 41–76 (AESSWGDEQADFQCDTMQPGCGNVCYDQAFPISHIR) the chain is on the extracellular side. The chain crosses the membrane as a helical span at residues 77 to 97 (YWVLQIIFVSTPSLVYMGHAM). The Cytoplasmic segment spans residues 98-164 (HTVRMQEKRK…CSILIRTTME (67 aa)). The chain crosses the membrane as a helical span at residues 165 to 185 (VAFIVGQYLLYGIFLDTLHVC). The Extracellular segment spans residues 186 to 205 (RRSPCPHPVNCYVSRPTEKN). Residues 206–226 (VFIVFMLAVAALSLFLSLAEL) traverse the membrane as a helical segment. The Cytoplasmic portion of the chain corresponds to 227–358 (YHLGWKKLRQ…SKARSDDLSV (132 aa)). Residues 318–358 (AQKPEVPNGASPGHRLPHGYQSDKRRLSKASSKARSDDLSV) form a disordered region. 2 positions are modified to phosphoserine: serine 353 and serine 357.

This sequence belongs to the connexin family. Alpha-type (group II) subfamily. A connexon is composed of a hexamer of connexins.

It localises to the cell membrane. The protein localises to the cell junction. Its subcellular location is the gap junction. One gap junction consists of a cluster of closely packed pairs of transmembrane channels, the connexons, through which materials of low MW diffuse from one cell to a neighboring cell. The protein is Gap junction alpha-5 protein (GJA5) of Canis lupus familiaris (Dog).